The sequence spans 202 residues: Adenylyl-sulfate kinase (202 aa).

31–38 (GLSASGKS) is a binding site for ATP. Serine 105 acts as the Phosphoserine intermediate in catalysis.

It belongs to the APS kinase family.

It catalyses the reaction adenosine 5'-phosphosulfate + ATP = 3'-phosphoadenylyl sulfate + ADP + H(+). Its pathway is sulfur metabolism; hydrogen sulfide biosynthesis; sulfite from sulfate: step 2/3. In terms of biological role, catalyzes the synthesis of activated sulfate. This Saccharomyces pastorianus (Lager yeast) protein is Adenylyl-sulfate kinase (MET14).